The chain runs to 151 residues: Deoxyuridine 5'-triphosphate nucleotidohydrolase (151 aa).

Residues 70-72 (RSG), asparagine 83, 87-89 (LID), and methionine 97 contribute to the substrate site.

Belongs to the dUTPase family. Mg(2+) serves as cofactor.

It catalyses the reaction dUTP + H2O = dUMP + diphosphate + H(+). The protein operates within pyrimidine metabolism; dUMP biosynthesis; dUMP from dCTP (dUTP route): step 2/2. Functionally, this enzyme is involved in nucleotide metabolism: it produces dUMP, the immediate precursor of thymidine nucleotides and it decreases the intracellular concentration of dUTP so that uracil cannot be incorporated into DNA. In Sodalis glossinidius (strain morsitans), this protein is Deoxyuridine 5'-triphosphate nucleotidohydrolase.